Here is a 65-residue protein sequence, read N- to C-terminus: MPSVRIKEREPFDVALRRFKRSCEKAGIVSELRRREYFEKPTWARKRKKTAAVKRAHKSNIIVKR.

It belongs to the bacterial ribosomal protein bS21 family.

The sequence is that of Small ribosomal subunit protein bS21B from Francisella tularensis subsp. holarctica (strain LVS).